We begin with the raw amino-acid sequence, 101 residues long: NAD(P)H-quinone oxidoreductase subunit 4L, chloroplastic (101 aa).

The next 3 helical transmembrane spans lie at 2–22 (IFQS…YGLL), 32–52 (MSLE…SNFV), and 61–81 (VLAL…LAII).

It belongs to the complex I subunit 4L family. As to quaternary structure, NDH is composed of at least 16 different subunits, 5 of which are encoded in the nucleus.

It is found in the plastid. The protein resides in the chloroplast thylakoid membrane. It carries out the reaction a plastoquinone + NADH + (n+1) H(+)(in) = a plastoquinol + NAD(+) + n H(+)(out). The catalysed reaction is a plastoquinone + NADPH + (n+1) H(+)(in) = a plastoquinol + NADP(+) + n H(+)(out). Its function is as follows. NDH shuttles electrons from NAD(P)H:plastoquinone, via FMN and iron-sulfur (Fe-S) centers, to quinones in the photosynthetic chain and possibly in a chloroplast respiratory chain. The immediate electron acceptor for the enzyme in this species is believed to be plastoquinone. Couples the redox reaction to proton translocation, and thus conserves the redox energy in a proton gradient. This chain is NAD(P)H-quinone oxidoreductase subunit 4L, chloroplastic, found in Nephroselmis olivacea (Green alga).